We begin with the raw amino-acid sequence, 396 residues long: Probable sugar efflux transporter (396 aa).

Transmembrane regions (helical) follow at residues 15 to 35 (VVTL…PVGL), 50 to 70 (VGIM…PFML), 81 to 101 (LICL…AWNF), 103 to 123 (VLVI…SITA), 136 to 156 (AQAL…GLPI), 169 to 189 (TFFA…KLLP), 209 to 229 (PALM…YTAY), 246 to 266 (FATV…LVFG), 275 to 295 (SLVS…LPAA), 301 to 321 (LAIL…GMQV), 333 to 353 (VAMA…ALVG), and 364 to 384 (AIGY…VLIF).

The protein belongs to the major facilitator superfamily. SotB (TC 2.A.1.2) family.

Its subcellular location is the cell inner membrane. Functionally, involved in the efflux of sugars. The physiological role may be the reduction of the intracellular concentration of toxic sugars or sugar metabolites. The polypeptide is Probable sugar efflux transporter (Salmonella schwarzengrund (strain CVM19633)).